Here is a 195-residue protein sequence, read N- to C-terminus: Fe/S biogenesis protein NfuA (195 aa).

Cys152 and Cys155 together coordinate [4Fe-4S] cluster.

It belongs to the NfuA family. In terms of assembly, homodimer. [4Fe-4S] cluster serves as cofactor.

Functionally, involved in iron-sulfur cluster biogenesis. Binds a 4Fe-4S cluster, can transfer this cluster to apoproteins, and thereby intervenes in the maturation of Fe/S proteins. Could also act as a scaffold/chaperone for damaged Fe/S proteins. The sequence is that of Fe/S biogenesis protein NfuA from Vibrio cholerae serotype O1 (strain ATCC 39315 / El Tor Inaba N16961).